The sequence spans 411 residues: GPI-anchor transamidase (411 aa).

Residues 1–22 (MRIAMHLPLLLLYIFLLPLSGA) form the signal peptide. The Lumenal portion of the chain corresponds to 23–376 (NNTDAAHEVI…DIDSNECFFT (354 aa)). Active-site residues include His157 and Cys199. N-linked (GlcNAc...) asparagine glycans are attached at residues Asn256 and Asn346. The helical transmembrane segment at 377 to 397 (SFKQSATIILALIVTILWFML) threads the bilayer. Topologically, residues 398–411 (RGNTAKATYDLYTN) are cytoplasmic.

It belongs to the peptidase C13 family. In terms of assembly, forms a complex with CDC91, GPI16, GPI17 and GAA1. In terms of processing, the disulfide bond between GPI8 and GPI16 is important for normal enzyme activity.

It is found in the endoplasmic reticulum membrane. It participates in glycolipid biosynthesis; glycosylphosphatidylinositol-anchor biosynthesis. In terms of biological role, mediates GPI anchoring in the endoplasmic reticulum, by replacing a protein's C-terminal GPI attachment signal peptide with a pre-assembled GPI. During this transamidation reaction, the GPI transamidase forms a carbonyl intermediate with the substrate protein. This Saccharomyces cerevisiae (strain ATCC 204508 / S288c) (Baker's yeast) protein is GPI-anchor transamidase (GPI8).